The primary structure comprises 476 residues: Protein transport protein Sec61 subunit alpha (476 aa).

Topologically, residues 2–33 (GIKFLEVIKPFCAVLPEIQKPERKIQFREKVL) are cytoplasmic. A helical transmembrane segment spans residues 34-53 (WTAITLFIFLVCCQIPLFGI). The Lumenal portion of the chain corresponds to 54-76 (MSSDSADPFYWMRVILASNRGTL). A helical transmembrane segment spans residues 77–96 (MELGISPIVTSDLIMQLLAG). Over 97–117 (AKIIEVGDSPKDRALFNGAQK) the chain is Cytoplasmic. Residues 118–138 (LFGMIITIGQAIVYVMTGMYG) traverse the membrane as a helical segment. The Lumenal portion of the chain corresponds to 139-144 (DPSEMG). A helical transmembrane segment spans residues 145 to 165 (AGICLVIIIQLFVAGLIVLLL). At 166–172 (DELLQKG) the chain is on the cytoplasmic side. Residues 173 to 193 (YGLGSGISLLIATNICETIVW) form a helical membrane-spanning segment. The Lumenal segment spans residues 194–240 (KAFSPTTVNTGRGTEFEGAIIALFHLLATRTDKVRALREAFYRQNLP). A helical membrane pass occupies residues 241-261 (NLMNLIATVFVFAVVIYFQGF). The Cytoplasmic segment spans residues 262–288 (RVDLPIKSARYRGQYNTYPIKLFYTSN). The helical transmembrane segment at 289-309 (IPIILQSALVSNLYVISQMLS) threads the bilayer. Over 310-354 (TRFSGNFIVNLLGTWSDTSTGGPARAYPVGGLCYFLSPPESFGSV) the chain is Lumenal. Residues 355–375 (LDDPVHAAIYIVFMLGSCAFF) traverse the membrane as a helical segment. Topologically, residues 376 to 420 (SKTWIEVSGSSAKDVAKQLKEQQMVMRGHRETSMVHELNRYIPTA) are cytoplasmic. Residues 421–441 (AAFGGLCIGGLSVMADFLGAI) form a helical membrane-spanning segment. Topologically, residues 442–445 (GSGT) are lumenal. The chain crosses the membrane as a helical span at residues 446-462 (GILLAVTIIYQYFEIFV). Over 463 to 476 (KEQSEMGSMGGLFF) the chain is Cytoplasmic.

This sequence belongs to the SecY/SEC61-alpha family. As to quaternary structure, the SEC61 channel-forming translocon complex consists of channel-forming core components SEC61A1, SEC61B and SEC61G and different auxiliary components such as SEC62 and SEC63. The SEC61 channel associates with the multi-pass translocon (MPT) complex.

The protein localises to the endoplasmic reticulum membrane. In terms of biological role, component of SEC61 channel-forming translocon complex that mediates transport of signal peptide-containing precursor polypeptides across the endoplasmic reticulum (ER). Forms a ribosome receptor and a gated pore in the ER membrane, both functions required for cotranslational translocation of nascent polypeptides. May cooperate with auxiliary protein SEC62, SEC63 and HSPA5/BiP to enable post-translational transport of small presecretory proteins. The SEC61 channel is also involved in ER membrane insertion of transmembrane proteins: it mediates membrane insertion of the first few transmembrane segments of proteins, while insertion of subsequent transmembrane regions of multi-pass membrane proteins is mediated by the multi-pass translocon (MPT) complex. The protein is Protein transport protein Sec61 subunit alpha (sec61a) of Boreogadus saida (Polar cod).